Consider the following 95-residue polypeptide: Aspartyl/glutamyl-tRNA(Asn/Gln) amidotransferase subunit C (95 aa).

Belongs to the GatC family. Heterotrimer of A, B and C subunits.

It carries out the reaction L-glutamyl-tRNA(Gln) + L-glutamine + ATP + H2O = L-glutaminyl-tRNA(Gln) + L-glutamate + ADP + phosphate + H(+). The enzyme catalyses L-aspartyl-tRNA(Asn) + L-glutamine + ATP + H2O = L-asparaginyl-tRNA(Asn) + L-glutamate + ADP + phosphate + 2 H(+). Allows the formation of correctly charged Asn-tRNA(Asn) or Gln-tRNA(Gln) through the transamidation of misacylated Asp-tRNA(Asn) or Glu-tRNA(Gln) in organisms which lack either or both of asparaginyl-tRNA or glutaminyl-tRNA synthetases. The reaction takes place in the presence of glutamine and ATP through an activated phospho-Asp-tRNA(Asn) or phospho-Glu-tRNA(Gln). This is Aspartyl/glutamyl-tRNA(Asn/Gln) amidotransferase subunit C from Desulfosudis oleivorans (strain DSM 6200 / JCM 39069 / Hxd3) (Desulfococcus oleovorans).